We begin with the raw amino-acid sequence, 196 residues long: dCTP deaminase, dUMP-forming (196 aa).

Residues 101–106, Asp-119, 127–129, Gln-148, Tyr-162, and Gln-174 each bind dCTP; these read KSSLGR and TLE. Glu-129 (proton donor/acceptor) is an active-site residue.

It belongs to the dCTP deaminase family. As to quaternary structure, homotrimer.

It catalyses the reaction dCTP + 2 H2O = dUMP + NH4(+) + diphosphate. The protein operates within pyrimidine metabolism; dUMP biosynthesis; dUMP from dCTP: step 1/1. Functionally, bifunctional enzyme that catalyzes both the deamination of dCTP to dUTP and the hydrolysis of dUTP to dUMP without releasing the toxic dUTP intermediate. In Thermobifida fusca (strain YX), this protein is dCTP deaminase, dUMP-forming.